The following is a 76-amino-acid chain: Exodeoxyribonuclease 7 small subunit (76 aa).

The protein belongs to the XseB family. Heterooligomer composed of large and small subunits.

Its subcellular location is the cytoplasm. It catalyses the reaction Exonucleolytic cleavage in either 5'- to 3'- or 3'- to 5'-direction to yield nucleoside 5'-phosphates.. Its function is as follows. Bidirectionally degrades single-stranded DNA into large acid-insoluble oligonucleotides, which are then degraded further into small acid-soluble oligonucleotides. This chain is Exodeoxyribonuclease 7 small subunit, found in Geotalea daltonii (strain DSM 22248 / JCM 15807 / FRC-32) (Geobacter daltonii).